A 174-amino-acid chain; its full sequence is Austinoid biosynthesis clusters protein H (174 aa).

It belongs to the trt14 isomerase family. Homodimer.

It participates in secondary metabolite biosynthesis; terpenoid biosynthesis. Functionally, part of the gene cluster B that mediates the biosynthesis of austinol and dehydroaustinol, two fungal meroterpenoids. The first step of the pathway is the synthesis of 3,5-dimethylorsellinic acid by the polyketide synthase ausA. 3,5-dimethylorsellinic acid is then prenylated by the polyprenyl transferase ausN. Further epoxidation by the FAD-dependent monooxygenase ausM and cyclization by the probable terpene cyclase ausL lead to the formation of protoaustinoid A. Protoaustinoid A is then oxidized to spiro-lactone preaustinoid A3 by the combined action of the FAD-binding monooxygenases ausB and ausC, and the dioxygenase ausE. Acid-catalyzed keto-rearrangement and ring contraction of the tetraketide portion of preaustinoid A3 by ausJ lead to the formation of preaustinoid A4. The aldo-keto reductase ausK, with the help of ausH, is involved in the next step by transforming preaustinoid A4 into isoaustinone which is in turn hydroxylated by the P450 monooxygenase ausI to form austinolide. Finally, the cytochrome P450 monooxygenase ausG modifies austinolide to austinol. Austinol can be further modified to dehydroaustinol which forms a diffusible complex with diorcinol that initiates conidiation. Due to genetic rearrangements of the clusters and the subsequent loss of some enzymes, the end products of the Emericella nidulans austinoid biosynthesis clusters are austinol and dehydroaustinol, even if additional enzymes, such as the O-acetyltransferase ausQ and the cytochrome P450 monooxygenase ausR are still functional. The polypeptide is Austinoid biosynthesis clusters protein H (Emericella nidulans (strain FGSC A4 / ATCC 38163 / CBS 112.46 / NRRL 194 / M139) (Aspergillus nidulans)).